Consider the following 288-residue polypeptide: ATP synthase gamma chain (288 aa).

The protein belongs to the ATPase gamma chain family. As to quaternary structure, F-type ATPases have 2 components, CF(1) - the catalytic core - and CF(0) - the membrane proton channel. CF(1) has five subunits: alpha(3), beta(3), gamma(1), delta(1), epsilon(1). CF(0) has three main subunits: a, b and c.

It is found in the cell inner membrane. In terms of biological role, produces ATP from ADP in the presence of a proton gradient across the membrane. The gamma chain is believed to be important in regulating ATPase activity and the flow of protons through the CF(0) complex. The chain is ATP synthase gamma chain from Glaesserella parasuis serovar 5 (strain SH0165) (Haemophilus parasuis).